A 228-amino-acid chain; its full sequence is Octanoyltransferase (228 aa).

Positions 30 to 213 constitute a BPL/LPL catalytic domain; it reads NKVEDIMLLL…YFSRVFDFEP (184 aa). Residues 75–82, 143–145, and 156–158 contribute to the substrate site; these read RGGDVTYH, AIG, and GFA. Cysteine 174 functions as the Acyl-thioester intermediate in the catalytic mechanism.

The protein belongs to the LipB family.

The protein resides in the cytoplasm. It carries out the reaction octanoyl-[ACP] + L-lysyl-[protein] = N(6)-octanoyl-L-lysyl-[protein] + holo-[ACP] + H(+). The protein operates within protein modification; protein lipoylation via endogenous pathway; protein N(6)-(lipoyl)lysine from octanoyl-[acyl-carrier-protein]: step 1/2. Catalyzes the transfer of endogenously produced octanoic acid from octanoyl-acyl-carrier-protein onto the lipoyl domains of lipoate-dependent enzymes. Lipoyl-ACP can also act as a substrate although octanoyl-ACP is likely to be the physiological substrate. In Desulforamulus reducens (strain ATCC BAA-1160 / DSM 100696 / MI-1) (Desulfotomaculum reducens), this protein is Octanoyltransferase.